The chain runs to 124 residues: UPF0102 protein PP_1324 (124 aa).

The protein belongs to the UPF0102 family.

In Pseudomonas putida (strain ATCC 47054 / DSM 6125 / CFBP 8728 / NCIMB 11950 / KT2440), this protein is UPF0102 protein PP_1324.